The chain runs to 207 residues: Ras-related protein Rab-7a (207 aa).

At Thr2 the chain carries N-acetylthreonine. GTP-binding residues include Ser17, Gly18, Val19, Gly20, Lys21, Thr22, Ser23, Ser34, Asn35, Tyr37, and Thr40. Thr22 provides a ligand contact to Mg(2+). Positions 28-41 (YVNKKFSNQYKATI) match the Switch 1 motif. Residues Thr40 and Asp63 each contribute to the Mg(2+) site. GTP is bound at residue Gly66. The short motif at 67 to 82 (QERFQSLGVAFYRGAD) is the Switch 2 element. At Ser72 the chain carries Phosphoserine. The GTP site is built by Asn125, Lys126, Asp128, Ala156, and Lys157. Glycyl lysine isopeptide (Lys-Gly) (interchain with G-Cter in ubiquitin) cross-links involve residues Lys191 and Lys194. Residues Cys205 and Cys207 are each lipidated (S-geranylgeranyl cysteine). Residue Cys207 is modified to Cysteine methyl ester.

Belongs to the small GTPase superfamily. Rab family. In terms of assembly, interacts with NTRK1/TRKA. Interacts with RILP. Interacts with PSMA7. Interacts with RNF115. Interacts with FYCO1. Interacts with the PIK3C3/VPS34-PIK3R4 complex. The GTP-bound form interacts with OSBPL1A. The GTP-bound form interacts with RAC1. Interacts with CLN3. Interacts with CHM, the substrate-binding subunit of the Rab geranylgeranyltransferase complex. Interacts with C9orf72. Does not interact with HPS4 and the BLOC-3 complex (heterodimer of HPS1 and HPS4). Interacts with CLN5. Interacts with PLEKHM1 (via N- and C-terminus). Interacts with PRPH; the interaction is direct. Interacts with VPS13A. The GDP-bound form interacts with RIMOC1. Interacts with the MON1A-CCZ1B complex and this interaction is enhanced in the presence of RIMOC1. Interacts with VPS39 and VPS41. Forms a ternary complex with LAMP2 and RUFY4; the interaction with LAMP2 is mediated by RUFY4 (via RUN and coiled coil domains). It depends on Mg(2+) as a cofactor. In terms of processing, deubiquitination at Lys-191 and Lys-194 by USP32. Post-translationally, phosphorylated at Ser-72 by LRRK1; phosphorylation is dependent on protein kinase C (PKC) activation of LRRK1. Prenylated. Prenylation is required for association with cellular membranes.

It localises to the cytoplasmic vesicle. The protein resides in the phagosome membrane. It is found in the late endosome membrane. Its subcellular location is the lysosome membrane. The protein localises to the melanosome membrane. It localises to the autophagosome membrane. The protein resides in the lipid droplet. It is found in the endosome membrane. Its subcellular location is the mitochondrion membrane. The catalysed reaction is GTP + H2O = GDP + phosphate + H(+). With respect to regulation, regulated by guanine nucleotide exchange factors (GEFs) which promote the exchange of bound GDP for free GTP. Regulated by GTPase activating proteins (GAPs) which increase the GTP hydrolysis activity. Inhibited by GDP dissociation inhibitors (GDIs). Its function is as follows. The small GTPases Rab are key regulators of intracellular membrane trafficking, from the formation of transport vesicles to their fusion with membranes. Rabs cycle between an inactive GDP-bound form and an active GTP-bound form that is able to recruit to membranes different sets of downstream effectors directly responsible for vesicle formation, movement, tethering and fusion. In its active state, RAB7A binds to a variety of effector proteins playing a key role in the regulation of endo-lysosomal trafficking. Governs early-to-late endosomal maturation, microtubule minus-end as well as plus-end directed endosomal migration and positioning, and endosome-lysosome transport through different protein-protein interaction cascades. Also plays a central role in growth-factor-mediated cell signaling, nutrient-transporter-mediated nutrient uptake, neurotrophin transport in the axons of neurons and lipid metabolism. Also involved in regulation of some specialized endosomal membrane trafficking, such as maturation of melanosomes, pathogen-induced phagosomes (or vacuoles) and autophagosomes. Plays a role in the maturation and acidification of phagosomes that engulf pathogens, such as S.aureus and Mycobacteria. Plays a role in the fusion of phagosomes with lysosomes. In concert with RAC1, plays a role in regulating the formation of RBs (ruffled borders) in osteoclasts. Controls the endosomal trafficking and neurite outgrowth signaling of NTRK1/TRKA. Regulates the endocytic trafficking of the EGF-EGFR complex by regulating its lysosomal degradation. Involved in the ADRB2-stimulated lipolysis through lipophagy, a cytosolic lipase-independent autophagic pathway. Required for the exosomal release of SDCBP, CD63 and syndecan. Required for vesicular trafficking and cell surface expression of ACE2. May play a role in PRPH neuronal intermediate filament assembly. The protein is Ras-related protein Rab-7a (RAB7A) of Pongo abelii (Sumatran orangutan).